The primary structure comprises 294 residues: uncharacterized protein (294 aa).

Disordered stretches follow at residues 1 to 30 (MKRQ…EVSH), 51 to 86 (ALSD…KKRP), and 250 to 294 (DELN…STST). Polar residues-rich tracts occupy residues 7 to 26 (QDSM…TPTK), 66 to 81 (PYSS…NSST), and 255 to 277 (PMNN…NLPT).

Its subcellular location is the nucleus. This is an uncharacterized protein from Schizosaccharomyces pombe (strain 972 / ATCC 24843) (Fission yeast).